The chain runs to 174 residues: Inactive signal peptidase IA (174 aa).

Topologically, residues 1–7 (MKKVVKY) are cytoplasmic. A helical membrane pass occupies residues 8–28 (LISLILAIIIVLFVQTFVIVG). The Extracellular portion of the chain corresponds to 29 to 174 (HVIPNNDMSP…FSKWTIQFKS (146 aa)).

It belongs to the peptidase S26 family.

The protein localises to the cell membrane. Catalytically inactive. This Staphylococcus aureus (strain MRSA252) protein is Inactive signal peptidase IA (spsA).